The primary structure comprises 171 residues: Adenine phosphoribosyltransferase (171 aa).

It belongs to the purine/pyrimidine phosphoribosyltransferase family. In terms of assembly, homodimer.

It is found in the cytoplasm. It carries out the reaction AMP + diphosphate = 5-phospho-alpha-D-ribose 1-diphosphate + adenine. The protein operates within purine metabolism; AMP biosynthesis via salvage pathway; AMP from adenine: step 1/1. Functionally, catalyzes a salvage reaction resulting in the formation of AMP, that is energically less costly than de novo synthesis. This Citrifermentans bemidjiense (strain ATCC BAA-1014 / DSM 16622 / JCM 12645 / Bem) (Geobacter bemidjiensis) protein is Adenine phosphoribosyltransferase.